The primary structure comprises 370 residues: NADH-quinone oxidoreductase subunit D (370 aa).

This sequence belongs to the complex I 49 kDa subunit family. NDH-1 is composed of 14 different subunits. Subunits NuoB, C, D, E, F, and G constitute the peripheral sector of the complex.

It is found in the cell membrane. The enzyme catalyses a quinone + NADH + 5 H(+)(in) = a quinol + NAD(+) + 4 H(+)(out). Its function is as follows. NDH-1 shuttles electrons from NADH, via FMN and iron-sulfur (Fe-S) centers, to quinones in the respiratory chain. The immediate electron acceptor for the enzyme in this species is believed to be a menaquinone. Couples the redox reaction to proton translocation (for every two electrons transferred, four hydrogen ions are translocated across the cytoplasmic membrane), and thus conserves the redox energy in a proton gradient. This is NADH-quinone oxidoreductase subunit D from Desulfitobacterium hafniense (strain Y51).